Here is a 234-residue protein sequence, read N- to C-terminus: Purine nucleoside phosphorylase DeoD-type (234 aa).

Residue His-5 coordinates a purine D-ribonucleoside. Residues Gly-21, Arg-25, Arg-44, and 88-91 (RVGT) contribute to the phosphate site. A purine D-ribonucleoside-binding positions include 178–180 (EME) and 202–203 (SD). Catalysis depends on Asp-203, which acts as the Proton donor.

The protein belongs to the PNP/UDP phosphorylase family. In terms of assembly, homohexamer; trimer of homodimers.

The enzyme catalyses a purine D-ribonucleoside + phosphate = a purine nucleobase + alpha-D-ribose 1-phosphate. It catalyses the reaction a purine 2'-deoxy-D-ribonucleoside + phosphate = a purine nucleobase + 2-deoxy-alpha-D-ribose 1-phosphate. Catalyzes the reversible phosphorolytic breakdown of the N-glycosidic bond in the beta-(deoxy)ribonucleoside molecules, with the formation of the corresponding free purine bases and pentose-1-phosphate. The chain is Purine nucleoside phosphorylase DeoD-type from Lactococcus lactis subsp. cremoris (strain MG1363).